A 123-amino-acid chain; its full sequence is Large ribosomal subunit protein bL12 (123 aa).

It belongs to the bacterial ribosomal protein bL12 family. As to quaternary structure, homodimer. Part of the ribosomal stalk of the 50S ribosomal subunit. Forms a multimeric L10(L12)X complex, where L10 forms an elongated spine to which 2 to 4 L12 dimers bind in a sequential fashion. Binds GTP-bound translation factors.

In terms of biological role, forms part of the ribosomal stalk which helps the ribosome interact with GTP-bound translation factors. Is thus essential for accurate translation. This Maricaulis maris (strain MCS10) (Caulobacter maris) protein is Large ribosomal subunit protein bL12.